A 1257-amino-acid polypeptide reads, in one-letter code: MVVALRYVWPLLLCSPCLLIQIPEEYEGHHVMEPPVITEQSPRRLVVFPTDDISLKCEASGKPEVQFRWTRDGVHFKPKEELGVTVYQSPHSGSFTITGNNSNFAQRFQGIYRCFASNKLGTAMSHEIRLMAEGAPKWPKETVKPVEVEEGESVVLPCNPPPSAEPLRIYWMNSKILHIKQDERVTMGQNGNLYFANVLTSDNHSDYICHAHFPGTRTIIQKEPIDLRVKATNSMIDRKPRLLFPTNSSSHLVALQGQPLVLECIAEGFPTPTIKWLRPSGPMPADRVTYQNHNKTLQLLKVGEEDDGEYRCLAENSLGSARHAYYVTVEAAPYWLHKPQSHLYGPGETARLDCQVQGRPQPEVTWRINGIPVEELAKDQKYRIQRGALILSNVQPSDTMVTQCEARNRHGLLLANAYIYVVQLPAKILTADNQTYMAVQGSTAYLLCKAFGAPVPSVQWLDEDGTTVLQDERFFPYANGTLGIRDLQANDTGRYFCLAANDQNNVTIMANLKVKDATQITQGPRSTIEKKGSRVTFTCQASFDPSLQPSITWRGDGRDLQELGDSDKYFIEDGRLVIHSLDYSDQGNYSCVASTELDVVESRAQLLVVGSPGPVPRLVLSDLHLLTQSQVRVSWSPAEDHNAPIEKYDIEFEDKEMAPEKWYSLGKVPGNQTSTTLKLSPYVHYTFRVTAINKYGPGEPSPVSETVVTPEAAPEKNPVDVKGEGNETTNMVITWKPLRWMDWNAPQVQYRVQWRPQGTRGPWQEQIVSDPFLVVSNTSTFVPYEIKVQAVNSQGKGPEPQVTIGYSGEDYPQAIPELEGIEILNSSAVLVKWRPVDLAQVKGHLRGYNVTYWREGSQRKHSKRHIHKDHVVVPANTTSVILSGLRPYSSYHLEVQAFNGRGSGPASEFTFSTPEGVPGHPEALHLECQSNTSLLLRWQPPLSHNGVLTGYVLSYHPLDEGGKGQLSFNLRDPELRTHNLTDLSPHLRYRFQLQATTKEGPGEAIVREGGTMALSGISDFGNISATAGENYSVVSWVPKEGQCNFRFHILFKALGEEKGGASLSPQYVSYNQSSYTQWDLQPDTDYEIHLFKERMFRHQMAVKTNGTGRVRLPPAGFATEGWFIGFVSAIILLLLVLLILCFIKRSKGGKYSVKDKEDTQVDSEARPMKDETFGEYRSLESDNEEKAFGSSQPSLNGDIKPLGSDDSLADYGGSVDVQFNEDGSFIGQYSGKKEKEAAGGNDSSGATSPINPAVALE.

An N-terminal signal peptide occupies residues 1 to 19; it reads MVVALRYVWPLLLCSPCLL. At 20–1120 the chain is on the extracellular side; it reads IQIPEEYEGH…RLPPAGFATE (1101 aa). Ig-like C2-type domains lie at 35-125, 139-226, 240-328, 333-420, 425-507, and 518-607; these read PVIT…TAMS, PKET…EPID, PRLL…YYVT, PYWL…AYIY, PAKI…NNVT, and TQIT…AQLL. 2 cysteine pairs are disulfide-bonded: C57–C114 and C158–C209. 4 N-linked (GlcNAc...) asparagine glycosylation sites follow: N100, N203, N247, and N294. 2 disulfide bridges follow: C264–C312 and C354–C404. Residues N433, N479, N490, and N505 are each glycosylated (N-linked (GlcNAc...) asparagine). A disulfide bridge connects residues C448 and C497. C539 and C591 form a disulfide bridge. Positions 554 to 556 match the Cell attachment site motif; sequence RGD. 2 N-linked (GlcNAc...) asparagine glycosylation sites follow: N588 and N671. Fibronectin type-III domains lie at 615-712, 717-810, 814-916, 920-1015, and 1016-1115; these read VPRL…TPEA, NPVD…SGED, AIPE…TPEG, HPEA…MALS, and GISD…LPPA. The interval 698–725 is disordered; that stretch reads GEPSPVSETVVTPEAAPEKNPVDVKGEG. Positions 713-725 are enriched in basic and acidic residues; sequence APEKNPVDVKGEG. N726, N777, N825, N849, N876, N979, N1022, N1030, N1071, and N1105 each carry an N-linked (GlcNAc...) asparagine glycan. A helical membrane pass occupies residues 1121–1143; the sequence is GWFIGFVSAIILLLLVLLILCFI. Over 1144 to 1257 the chain is Cytoplasmic; sequence KRSKGGKYSV…SPINPAVALE (114 aa). Phosphoserine occurs at positions 1163, 1172, 1177, and 1178. Residues 1176–1187 are compositionally biased toward basic and acidic residues; the sequence is YRSLESDNEEKA. Disordered stretches follow at residues 1176 to 1207 and 1226 to 1257; these read YRSLESDNEEKAFGSSQPSLNGDIKPLGSDDS and IGQYSGKKEKEAAGGNDSSGATSPINPAVALE. S1181 is subject to Phosphoserine; by CaMK2. A phosphoserine mark is found at S1194, S1243, S1244, and S1248. Polar residues predominate over residues 1241–1250; sequence NDSSGATSPI.

The protein belongs to the immunoglobulin superfamily. L1/neurofascin/NgCAM family. As to quaternary structure, interacts with SHTN1; the interaction occurs in axonal growth cones. Interacts with isoform 2 of BSG.

It localises to the cell membrane. The protein resides in the cell projection. The protein localises to the growth cone. It is found in the axon. Its subcellular location is the dendrite. In terms of biological role, neural cell adhesion molecule involved in the dynamics of cell adhesion and in the generation of transmembrane signals at tyrosine kinase receptors. During brain development, critical in multiple processes, including neuronal migration, axonal growth and fasciculation, and synaptogenesis. In the mature brain, plays a role in the dynamics of neuronal structure and function, including synaptic plasticity. In Homo sapiens (Human), this protein is Neural cell adhesion molecule L1 (L1CAM).